The primary structure comprises 247 residues: tRNA (guanine-N(1)-)-methyltransferase (247 aa).

Glycine 126 provides a ligand contact to S-adenosyl-L-methionine.

The protein belongs to the RNA methyltransferase TrmD family. In terms of assembly, homodimer.

The protein resides in the cytoplasm. It catalyses the reaction guanosine(37) in tRNA + S-adenosyl-L-methionine = N(1)-methylguanosine(37) in tRNA + S-adenosyl-L-homocysteine + H(+). Its function is as follows. Specifically methylates guanosine-37 in various tRNAs. The chain is tRNA (guanine-N(1)-)-methyltransferase from Jannaschia sp. (strain CCS1).